A 350-amino-acid polypeptide reads, in one-letter code: Phosphate acyltransferase (350 aa).

This sequence belongs to the PlsX family. As to quaternary structure, homodimer. Probably interacts with PlsY.

Its subcellular location is the cytoplasm. It carries out the reaction a fatty acyl-[ACP] + phosphate = an acyl phosphate + holo-[ACP]. Its pathway is lipid metabolism; phospholipid metabolism. Functionally, catalyzes the reversible formation of acyl-phosphate (acyl-PO(4)) from acyl-[acyl-carrier-protein] (acyl-ACP). This enzyme utilizes acyl-ACP as fatty acyl donor, but not acyl-CoA. This chain is Phosphate acyltransferase, found in Chelativorans sp. (strain BNC1).